The chain runs to 294 residues: NAD kinase (294 aa).

Residue aspartate 72 is the Proton acceptor of the active site. NAD(+) is bound by residues 72–73 (DG), 146–147 (ND), arginine 157, arginine 174, aspartate 176, 187–192 (TAYALS), and glutamine 247.

It belongs to the NAD kinase family. It depends on a divalent metal cation as a cofactor.

Its subcellular location is the cytoplasm. The catalysed reaction is NAD(+) + ATP = ADP + NADP(+) + H(+). In terms of biological role, involved in the regulation of the intracellular balance of NAD and NADP, and is a key enzyme in the biosynthesis of NADP. Catalyzes specifically the phosphorylation on 2'-hydroxyl of the adenosine moiety of NAD to yield NADP. The sequence is that of NAD kinase from Saccharophagus degradans (strain 2-40 / ATCC 43961 / DSM 17024).